Reading from the N-terminus, the 134-residue chain is Small ribosomal subunit protein bS6 (134 aa).

This sequence belongs to the bacterial ribosomal protein bS6 family.

In terms of biological role, binds together with bS18 to 16S ribosomal RNA. The chain is Small ribosomal subunit protein bS6 from Chlorobium phaeobacteroides (strain BS1).